The following is an 83-amino-acid chain: Aspergillic acid biosynthesis cluster protein F (83 aa).

It participates in secondary metabolite biosynthesis. Functionally, part of the gene cluster that mediates the biosynthesis of aspergillic acid, a hydroxamic acid-containing pyrazinone with aliphatic side chains that originates from leucine (Leu) and isoleucine (Ile). Aspergillic acid has antibiotic properties and was shown to be lethal to mice. The first step in the pathway is the production of deoxyaspergillic acid via a condensation between the Ile amine and the Leu carboxylic acid, followed by a reductive release from the protein forming the dipeptide aldehyde NH(2)-Leu-Ile-CHO, which could undergo an intermolecular cyclization resulting in a dihydropyrazinone. As the NRPS asaC lacks a condensation domain, it is improbable that it is responsible for condensation of Leu and Ile. One possibility is that asaC acts on a previously condensed dipeptide and functions as a Leu-Ile reductase to yield deoxyaspergillic acid. After asaC forms deoxyaspergillic acid, the cytochrome P450 asaD oxidizes the pyrazinone to the hydroxamic acid-containing bioactive metabolite aspergillic acid. The hydroxylase/desaturase asaB can then convert aspergillic acid to hydroxyaspergillic acid. Both aspergillic acid and hydroxyaspergillic acid can form complexes with iron producing ferriaspergillin analogs. This Aspergillus flavus (strain ATCC 200026 / FGSC A1120 / IAM 13836 / NRRL 3357 / JCM 12722 / SRRC 167) protein is Aspergillic acid biosynthesis cluster protein F.